The following is a 638-amino-acid chain: 1-deoxy-D-xylulose-5-phosphate synthase (638 aa).

Thiamine diphosphate-binding positions include His79 and Ala120–Ser122. Asp151 provides a ligand contact to Mg(2+). Thiamine diphosphate contacts are provided by residues Gly152–Ala153, Asn180, Tyr289, and Glu371. Residue Asn180 participates in Mg(2+) binding.

It belongs to the transketolase family. DXPS subfamily. In terms of assembly, homodimer. It depends on Mg(2+) as a cofactor. Requires thiamine diphosphate as cofactor.

The catalysed reaction is D-glyceraldehyde 3-phosphate + pyruvate + H(+) = 1-deoxy-D-xylulose 5-phosphate + CO2. Its pathway is metabolic intermediate biosynthesis; 1-deoxy-D-xylulose 5-phosphate biosynthesis; 1-deoxy-D-xylulose 5-phosphate from D-glyceraldehyde 3-phosphate and pyruvate: step 1/1. Functionally, catalyzes the acyloin condensation reaction between C atoms 2 and 3 of pyruvate and glyceraldehyde 3-phosphate to yield 1-deoxy-D-xylulose-5-phosphate (DXP). The sequence is that of 1-deoxy-D-xylulose-5-phosphate synthase from Rhizobium johnstonii (strain DSM 114642 / LMG 32736 / 3841) (Rhizobium leguminosarum bv. viciae).